The following is a 244-amino-acid chain: 1-(5-phosphoribosyl)-5-[(5-phosphoribosylamino)methylideneamino] imidazole-4-carboxamide isomerase (244 aa).

The active-site Proton acceptor is the D12. The Proton donor role is filled by D131.

Belongs to the HisA/HisF family.

The protein localises to the cytoplasm. It carries out the reaction 1-(5-phospho-beta-D-ribosyl)-5-[(5-phospho-beta-D-ribosylamino)methylideneamino]imidazole-4-carboxamide = 5-[(5-phospho-1-deoxy-D-ribulos-1-ylimino)methylamino]-1-(5-phospho-beta-D-ribosyl)imidazole-4-carboxamide. It participates in amino-acid biosynthesis; L-histidine biosynthesis; L-histidine from 5-phospho-alpha-D-ribose 1-diphosphate: step 4/9. The polypeptide is 1-(5-phosphoribosyl)-5-[(5-phosphoribosylamino)methylideneamino] imidazole-4-carboxamide isomerase (Nocardioides sp. (strain ATCC BAA-499 / JS614)).